A 445-amino-acid chain; its full sequence is Tubulin beta-4 chain (445 aa).

Residues Gln-11, Glu-69, Ser-138, Gly-142, Thr-143, Gly-144, Asn-204, and Asn-226 each contribute to the GTP site. Glu-69 contributes to the Mg(2+) binding site. A disordered region spans residues 421 to 445 (EYQQYQDATADEEYDEEEEEERDAE). Acidic residues predominate over residues 429-445 (TADEEYDEEEEEERDAE).

Belongs to the tubulin family. Dimer of alpha and beta chains. A typical microtubule is a hollow water-filled tube with an outer diameter of 25 nm and an inner diameter of 15 nM. Alpha-beta heterodimers associate head-to-tail to form protofilaments running lengthwise along the microtubule wall with the beta-tubulin subunit facing the microtubule plus end conferring a structural polarity. Microtubules usually have 13 protofilaments but different protofilament numbers can be found in some organisms and specialized cells. The cofactor is Mg(2+).

The protein resides in the cytoplasm. Its subcellular location is the cytoskeleton. In terms of biological role, tubulin is the major constituent of microtubules, a cylinder consisting of laterally associated linear protofilaments composed of alpha- and beta-tubulin heterodimers. Microtubules grow by the addition of GTP-tubulin dimers to the microtubule end, where a stabilizing cap forms. Below the cap, tubulin dimers are in GDP-bound state, owing to GTPase activity of alpha-tubulin. The protein is Tubulin beta-4 chain (TUBB4) of Triticum aestivum (Wheat).